Reading from the N-terminus, the 143-residue chain is ATP synthase subunit b' (143 aa).

A helical transmembrane segment spans residues 6 to 26 (ATLPLMALQFLVLAVVLNAVF).

It belongs to the ATPase B chain family. F-type ATPases have 2 components, F(1) - the catalytic core - and F(0) - the membrane proton channel. F(1) has five subunits: alpha(3), beta(3), gamma(1), delta(1), epsilon(1). F(0) has four main subunits: a(1), b(1), b'(1) and c(10-14). The alpha and beta chains form an alternating ring which encloses part of the gamma chain. F(1) is attached to F(0) by a central stalk formed by the gamma and epsilon chains, while a peripheral stalk is formed by the delta, b and b' chains.

The protein localises to the cellular thylakoid membrane. In terms of biological role, f(1)F(0) ATP synthase produces ATP from ADP in the presence of a proton or sodium gradient. F-type ATPases consist of two structural domains, F(1) containing the extramembraneous catalytic core and F(0) containing the membrane proton channel, linked together by a central stalk and a peripheral stalk. During catalysis, ATP synthesis in the catalytic domain of F(1) is coupled via a rotary mechanism of the central stalk subunits to proton translocation. Functionally, component of the F(0) channel, it forms part of the peripheral stalk, linking F(1) to F(0). The b'-subunit is a diverged and duplicated form of b found in plants and photosynthetic bacteria. This chain is ATP synthase subunit b', found in Gloeothece citriformis (strain PCC 7424) (Cyanothece sp. (strain PCC 7424)).